We begin with the raw amino-acid sequence, 222 residues long: Octanoyltransferase (222 aa).

The BPL/LPL catalytic domain maps to 35–210 (ETTPDELWLV…EFVHLLGYPK (176 aa)). Substrate is bound by residues 74–81 (RGGQVTYH), 141–143 (SLG), and 154–156 (GLA). Cys172 serves as the catalytic Acyl-thioester intermediate.

Belongs to the LipB family.

It localises to the cytoplasm. The enzyme catalyses octanoyl-[ACP] + L-lysyl-[protein] = N(6)-octanoyl-L-lysyl-[protein] + holo-[ACP] + H(+). It participates in protein modification; protein lipoylation via endogenous pathway; protein N(6)-(lipoyl)lysine from octanoyl-[acyl-carrier-protein]: step 1/2. Functionally, catalyzes the transfer of endogenously produced octanoic acid from octanoyl-acyl-carrier-protein onto the lipoyl domains of lipoate-dependent enzymes. Lipoyl-ACP can also act as a substrate although octanoyl-ACP is likely to be the physiological substrate. This chain is Octanoyltransferase, found in Serratia proteamaculans (strain 568).